A 281-amino-acid polypeptide reads, in one-letter code: Cell growth regulator with EF hand domain protein 1 (281 aa).

Positions 1-21 (MFQWLMQALMLPLLLLPLGRA) are cleaved as a signal peptide. 2 consecutive EF-hand domains span residues 71–106 (DREQ…ALAP) and 115–150 (PVIL…PKHT). Residues Asp84, Asp86, Asn88, Gln90, Glu95, Asp128, Asp130, Asp132, and Glu139 each coordinate Ca(2+). The tract at residues 148-281 (KHTESLPPAL…HSIQLENDEI (134 aa)) is disordered. The segment covering 168-183 (LLANSPLQSETQQSLG) has biased composition (polar residues). Over residues 184-213 (TKEEIRGQVEAKRASLEPEQEAGHQTEGKV) the composition is skewed to basic and acidic residues. A phosphoserine mark is found at Ser217 and Ser228. A compositionally biased stretch (basic and acidic residues) spans 237-256 (EGAEEQVEIKDNEGEAKELL).

Post-translationally, probably digested extracellularly by an unknown serine protease generating extremely hydrophobic bioactive peptides.

The protein localises to the secreted. In terms of biological role, mediates cell-cell adhesion in a calcium-dependent manner. Able to inhibit growth in several cell lines. This chain is Cell growth regulator with EF hand domain protein 1, found in Mus musculus (Mouse).